The primary structure comprises 259 residues: Ribosomal RNA small subunit methyltransferase J (259 aa).

S-adenosyl-L-methionine contacts are provided by residues 101–102 (RD), 117–118 (ER), 153–154 (SS), and D176.

It belongs to the methyltransferase superfamily. RsmJ family.

It localises to the cytoplasm. It catalyses the reaction guanosine(1516) in 16S rRNA + S-adenosyl-L-methionine = N(2)-methylguanosine(1516) in 16S rRNA + S-adenosyl-L-homocysteine + H(+). Its function is as follows. Specifically methylates the guanosine in position 1516 of 16S rRNA. This Vibrio vulnificus (strain CMCP6) protein is Ribosomal RNA small subunit methyltransferase J.